The chain runs to 218 residues: Large ribosomal subunit protein bL25 (218 aa).

2 disordered regions span residues 1–20 (MKTH…GPAR) and 185–218 (PTAA…ASEE). Positions 192–218 (EEGEEGEEGEEGGEGGEAEGAEAASEE) are enriched in acidic residues.

The protein belongs to the bacterial ribosomal protein bL25 family. CTC subfamily. In terms of assembly, part of the 50S ribosomal subunit; part of the 5S rRNA/L5/L18/L25 subcomplex. Contacts the 5S rRNA. Binds to the 5S rRNA independently of L5 and L18.

In terms of biological role, this is one of the proteins that binds to the 5S RNA in the ribosome where it forms part of the central protuberance. The polypeptide is Large ribosomal subunit protein bL25 (Desulfatibacillum aliphaticivorans).